The following is a 227-amino-acid chain: GRF-interacting factor 1 (227 aa).

The tract at residues R186–S227 is disordered.

This sequence belongs to the SS18 family. In terms of assembly, interacts with several GRFs. Interacts with GRF10. Interacts with GRF1. As to expression, expressed in shoots, aerial roots, ears and tassels. Expressed in the shoot apical meristem (SAM), young leaf primordia, leaf margins, inflorescence meristem, floral meristem and spikelet meristem.

Its function is as follows. Transcription coactivator that plays a role in the regulation of meristematic function in leaves, stems and inflorescences. Regulates shoot architecture and meristem determinacy. Binds to the inflorescence architecture gene UB3 (unbranched3). Regulates the expression of several genes involved in inflorescence architecture. Component of a network formed by the microRNA396 (miRNA396), the GRFs and their interacting factors (GIFs) acting in the regulation of meristem function, at least partially through the control of cell proliferation. Associates with the core SWI/SNF chromatin-remodeling complex and specific GRFs to tightly regulate the transition between cell division and cell expansion in growing leaves. The sequence is that of GRF-interacting factor 1 from Zea mays (Maize).